Reading from the N-terminus, the 249-residue chain is tRNA pseudouridine synthase A (249 aa).

The Nucleophile role is filled by D53. Residue Y111 coordinates substrate.

The protein belongs to the tRNA pseudouridine synthase TruA family. As to quaternary structure, homodimer.

The enzyme catalyses uridine(38/39/40) in tRNA = pseudouridine(38/39/40) in tRNA. Its function is as follows. Formation of pseudouridine at positions 38, 39 and 40 in the anticodon stem and loop of transfer RNAs. This chain is tRNA pseudouridine synthase A, found in Streptococcus suis (strain 98HAH33).